Consider the following 456-residue polypeptide: MTASLWQQCLNRLQDELPSAEFSMWIRPLQAELSDNTLTLYAPNRFVLDWVRDKYLIRVNGIINELCGVDGPTLRFDIGNRPHPVAVARAPARGADPVNNSQKSWESKAEAKPEPNHKSNTNVNYTFENFVEGKSNQLARAAARQVADNPGGAYNPLFLYGGTGLGKTHLLHAVGNAIKERKQDAKVIYMHSERFVQDMVKALQNNAIEEFKRYYRSVDALLIDDIQFFANKERSQEEFFHTFNALLEGNQQIILTSDRYPKEINGVEDRLKSRFGWGLTVAIEPPELETRVAILMRKADENQIHLPDEVAFFIAKRLRSNVRELEGALNRVIANANFTGRAINIDFVREALRDLLALQEKLVTIDNIQKTVAEYYKIKLADLLSKRRSRSVARPRQLAMALAKELTNHSLPEIGDAFGGRDHTTVLHACRKIEQLKEESHDIKEDYSNLIRTLSS.

The tract at residues 1 to 83 (MTASLWQQCL…LRFDIGNRPH (83 aa)) is domain I, interacts with DnaA modulators. The tract at residues 83-119 (HPVAVARAPARGADPVNNSQKSWESKAEAKPEPNHKS) is domain II. The segment at 92 to 122 (ARGADPVNNSQKSWESKAEAKPEPNHKSNTN) is disordered. Residues 105 to 117 (WESKAEAKPEPNH) show a composition bias toward basic and acidic residues. The tract at residues 120-336 (NTNVNYTFEN…GALNRVIANA (217 aa)) is domain III, AAA+ region. ATP-binding residues include G164, G166, K167, and T168. Residues 337–456 (NFTGRAINID…YSNLIRTLSS (120 aa)) are domain IV, binds dsDNA.

Belongs to the DnaA family. In terms of assembly, oligomerizes as a right-handed, spiral filament on DNA at oriC.

It localises to the cytoplasm. In terms of biological role, plays an essential role in the initiation and regulation of chromosomal replication. ATP-DnaA binds to the origin of replication (oriC) to initiate formation of the DNA replication initiation complex once per cell cycle. Binds the DnaA box (a 9 base pair repeat at the origin) and separates the double-stranded (ds)DNA. Forms a right-handed helical filament on oriC DNA; dsDNA binds to the exterior of the filament while single-stranded (ss)DNA is stabiized in the filament's interior. The ATP-DnaA-oriC complex binds and stabilizes one strand of the AT-rich DNA unwinding element (DUE), permitting loading of DNA polymerase. After initiation quickly degrades to an ADP-DnaA complex that is not apt for DNA replication. Binds acidic phospholipids. The sequence is that of Chromosomal replication initiator protein DnaA from Aeromonas hydrophila subsp. hydrophila (strain ATCC 7966 / DSM 30187 / BCRC 13018 / CCUG 14551 / JCM 1027 / KCTC 2358 / NCIMB 9240 / NCTC 8049).